The primary structure comprises 278 residues: HTH-type transcriptional activator RhaS (278 aa).

The HTH araC/xylS-type domain occupies 174–272 (NQLMAWLEDH…NWSPRDIRQG (99 aa)). 2 consecutive DNA-binding regions (H-T-H motif) follow at residues 191–212 (EAVAEQFSLSLRTLHRQLKQHT) and 239–262 (VTEIAYRCGFGDSNHFSTLFRREF).

In terms of assembly, binds DNA as a dimer.

It is found in the cytoplasm. Its function is as follows. Activates expression of the rhaBAD and rhaT operons. The chain is HTH-type transcriptional activator RhaS from Salmonella dublin (strain CT_02021853).